The following is a 155-amino-acid chain: MAHVIDLQVACTPTKLPTKEQFQLWVDTALAEVSSSPNQDFELTIRLVNNEESQQLNKQYRDKDKPTNVLSFPFEVPDGIELNLLGDLIICIEVMKQEAQEQNKALFEHWAHLVIHGCLHLVGFDHISDTEALEMESIEITILEKLGISNPYLEQ.

The Zn(2+) site is built by histidine 116, histidine 120, and histidine 126.

It belongs to the endoribonuclease YbeY family. Zn(2+) serves as cofactor.

It is found in the cytoplasm. Its function is as follows. Single strand-specific metallo-endoribonuclease involved in late-stage 70S ribosome quality control and in maturation of the 3' terminus of the 16S rRNA. The sequence is that of Endoribonuclease YbeY from Colwellia psychrerythraea (strain 34H / ATCC BAA-681) (Vibrio psychroerythus).